The sequence spans 303 residues: MATTRYEPVAEIGVGAYGTVYKARDPHSGHFVALKSVRVPNGGAAGGGLPVSTVREVALLRRLEAFEHPNVVRLMDVCATSRTDRDIKVTLVFEHIDQDLRTYLDKAPPPGLPVETIKDLMRQFLSGLDFLHANCIVHRDLKPENILVTSNGTVKLADFGLARIYSYQMALTPVVVTLWYRAPEVLLQSTYATPVDMWSVGCIFAEMFRRKPLFCGNSEADQLGKIFDLIGLPPEDDWPREVSLPRGAFSPRGPRPVQSVVPEMEESGAQLLLEMLTFNPLKRISAFRALQHSYLHKEESDPE.

N-acetylalanine is present on Ala2. A Protein kinase domain is found at 6–295 (YEPVAEIGVG…AFRALQHSYL (290 aa)). ATP-binding positions include 12-20 (IGVGAYGTV) and Lys35. Residues 50–56 (PVSTVRE) are required for binding D-type cyclins. Asp140 acts as the Proton acceptor in catalysis. Position 172 is a phosphothreonine; by CAK (Thr172). Ser300 is subject to Phosphoserine.

It belongs to the protein kinase superfamily. CMGC Ser/Thr protein kinase family. CDC2/CDKX subfamily. In terms of assembly, component of the D-CDK4 complex, composed of CDK4 and some D-type G1 cyclin (CCND1, CCND2 or CCND3). Interacts directly in the complex with CCND1, CCND2 or CCND3. Interacts with SEI1 and ZNF655. Forms a ternary complex, cyclin D-CDK4-CDKN1B, involved in modulating CDK4 enzymatic activity. Interacts directly with CDKN1B (phosphorylated on 'Tyr-88' and 'Tyr-89'); the interaction allows assembly of the cyclin D-CDK4 complex, Thr-172 phosphorylation, nuclear translocation and enhances the cyclin D-CDK4 complex activity. CDK4 activity is either inhibited or enhanced depending on stoichiometry of complex. The non-tyrosine-phosphorylated form of CDKN1B prevents T-loop phosphorylation of CDK4 producing inactive CDK4. Interacts (unphosphorylated form) with CDK2. Also forms ternary complexes with CDKN1A or CDKN2A. Interacts directly with CDKN1A (via its N-terminal); the interaction promotes the assembly of the cyclin D-CDK4 complex, its nuclear translocation and promotes the cyclin D-dependent enzyme activity of CDK4. Interacts with CCND1; the interaction is prevented with the binding of CCND1 to INSM1 during cell cycle progression. Probably forms a complex composed of chaperones HSP90 and HSP70, co-chaperones CDC37, PPP5C, TSC1 and client protein TSC2, CDK4, AKT, RAF1 and NR3C1; this complex does not contain co-chaperones STIP1/HOP and PTGES3/p23. Interacts with CEBPA (when phosphorylated). Interacts with FNIP1 and FNIP2. As to expression, expressed in fetal and adult lung. Also expressed in brain, heart, liver, skeletal muscle and testes.

The protein resides in the cytoplasm. It is found in the nucleus. The protein localises to the nucleus membrane. It catalyses the reaction L-seryl-[protein] + ATP = O-phospho-L-seryl-[protein] + ADP + H(+). The enzyme catalyses L-threonyl-[protein] + ATP = O-phospho-L-threonyl-[protein] + ADP + H(+). With respect to regulation, both phosphorylation at Thr-172 and binding of a D-type cyclin are necessary for enzymatic activity. Full activation of the cyclin-D-CDK4 complex appears to require other factors such as recruitment of the substrate via a substrate recruitment motif, and/or formation of the CDKN1B ternary complex. Inhibited by INK4 family members. In resting cells, the non-tyrosine-phosphorylated form of CDKN1B prevents phosphorylation at Thr-172 and inactivation, while, in proliferating cells, tyrosine phosphorylation of CDKN1B allows phosphorylation of Thr-172 of CDK4 and subsequent activation. Functionally, ser/Thr-kinase component of cyclin D-CDK4 (DC) complexes that phosphorylate and inhibit members of the retinoblastoma (RB) protein family including RB1 and regulate the cell-cycle during G(1)/S transition. Phosphorylation of RB1 allows dissociation of the transcription factor E2F from the RB/E2F complexes and the subsequent transcription of E2F target genes which are responsible for the progression through the G(1) phase. Hypophosphorylates RB1 in early G(1) phase. Cyclin D-CDK4 complexes are major integrators of various mitogenenic and antimitogenic signals. Also phosphorylates SMAD3 in a cell-cycle-dependent manner and represses its transcriptional activity. Component of the ternary complex, cyclin D/CDK4/CDKN1B, required for nuclear translocation and activity of the cyclin D-CDK4 complex. The sequence is that of Cyclin-dependent kinase 4 (Cdk4) from Rattus norvegicus (Rat).